A 164-amino-acid chain; its full sequence is LWamide neuropeptides (164 aa).

Positions R1–Q6 are excised as a propeptide. A disordered region spans residues R1–P92. 2 positions are modified to tryptophan amide: W11 and W20. Positions S23–Q27 are excised as a propeptide. 2 positions are modified to tryptophan amide: W32 and W41. Residues S44–Q49 constitute a propeptide that is removed on maturation. Tryptophan amide is present on residues W53 and W62. The propeptide occupies S65–Q70. Tryptophan amide occurs at positions 74 and 83. The propeptide occupies S86–Q90. A tryptophan amide mark is found at W95, W106, and W115. The propeptide occupies S118–Q123. Residues W127 and W137 each carry the tryptophan amide modification. Positions S140–Q164 are excised as a propeptide.

This sequence belongs to the LWamide neuropeptide family.

It localises to the secreted. In terms of biological role, metamorphosin A may be part of an internal signaling system involved in control of metamorphosis. The polypeptide is LWamide neuropeptides (Actinia equina (Beadlet anemone)).